We begin with the raw amino-acid sequence, 97 residues long: C-C motif chemokine 7 (97 aa).

An N-terminal signal peptide occupies residues 1–23 (MQISAALLCVLLTAAAFTVHVWA). Gln24 carries the pyrrolidone carboxylic acid modification. The N-linked (GlcNAc...) asparagine glycan is linked to Asn29. Disulfide bonds link Cys33–Cys57 and Cys34–Cys73.

Belongs to the intercrine beta (chemokine CC) family. Monomer. Interacts with TNFAIP6 (via Link domain).

Its subcellular location is the secreted. Its function is as follows. Chemotactic factor that attracts monocytes and eosinophils, but not neutrophils. Augments monocyte anti-tumor activity. This chain is C-C motif chemokine 7 (Ccl7), found in Rattus norvegicus (Rat).